The chain runs to 274 residues: Long chain fatty acid elongase 5 (274 aa).

Topologically, residues 1 to 23 are extracellular; the sequence is MMDQILGTNFTYEGAKEVARGLE. Residues 24-44 traverse the membrane as a helical segment; the sequence is GFSAKLAVGYIATIFGLKYYM. The Cytoplasmic segment spans residues 45-61; the sequence is KDRKAFDLSTPLNIWNG. The helical transmembrane segment at 62–82 threads the bilayer; the sequence is ILSTFSLLGFLFTFPTLLSVI. At 83-105 the chain is on the extracellular side; that stretch reads RKDGFSHTYSHVSELYTDSTSGY. A helical transmembrane segment spans residues 106–126; it reads WIFLWVISKIPELLDTVFIVL. The Cytoplasmic portion of the chain corresponds to 127-129; that stretch reads RKR. Residues 130 to 150 form a helical membrane-spanning segment; that stretch reads PLIFMHWYHHALTGYYALVCY. Topologically, residues 151 to 156 are extracellular; the sequence is HEDAVH. A helical membrane pass occupies residues 157 to 177; sequence MVWVVWMNYIIHAFMYGYYLL. Over 178 to 187 the chain is Cytoplasmic; it reads KSLKVPIPPS. A helical transmembrane segment spans residues 188-208; it reads VAQAITTSQMVQFAVAIFAQV. The Extracellular segment spans residues 209–227; it reads HVSYKHYVEGVEGLAYSFR. The helical transmembrane segment at 228-248 threads the bilayer; it reads GTAIGFFMLTTYFYLWIQFYK. Topologically, residues 249–274 are cytoplasmic; sequence EHYLKNGGKKYNLAKDQAKTQTKKAN.

This sequence belongs to the ELO family. In terms of tissue distribution, expressed in the gut and unidentified head cells.

The protein resides in the membrane. It carries out the reaction 11-methyldodecanoyl-CoA + malonyl-CoA + H(+) = 3-oxoisopentadecanoyl-CoA + CO2 + CoA. It catalyses the reaction isopentadecanoyl-CoA + malonyl-CoA + H(+) = 3-oxoisoheptadecanoyl-CoA + CO2 + CoA. It participates in lipid metabolism; fatty acid biosynthesis. Functionally, catalyzes the first and rate-limiting reaction of the four reactions that constitute the long-chain fatty acids elongation cycle. Uses malonyl-CoA to add 2 carbons per cycle to the chain of long-chain fatty acids. Condensing enzyme required for the formation of isopentadecanoate (C15iso) and isoheptadecanoate (C17iso), both play critical roles in animal development and growth. This Caenorhabditis elegans protein is Long chain fatty acid elongase 5.